A 469-amino-acid chain; its full sequence is Programmed cell death protein 4 (469 aa).

Met-1 carries the N-acetylmethionine modification. Disordered regions lie at residues 1–38 (MDVE…EIKN) and 58–128 (KAKR…GTPG). At Ser-25 the chain carries Phosphoserine. The Nuclear localization signal signature appears at 58–64 (KAKRRLR). At Ser-67 the chain carries Phosphoserine; by PKB and RPS6KB1. Phosphoserine is present on residues Ser-68, Ser-71, Ser-76, Ser-78, Ser-80, and Ser-94. The Phosphodegron signature appears at 70-76 (DSGRGDS). The segment covering 74–83 (GDSVSDSGSD) has biased composition (low complexity). Gly residues predominate over residues 114-125 (KKGGAGGKGVWG). Phosphotyrosine is present on Tyr-152. In terms of domain architecture, MI 1 spans 163–284 (AFEKTLTPII…CNTYIDSYKG (122 aa)). Positions 241 to 250 (DKLLKDLPEL) match the Nuclear localization signal motif. A phosphoserine mark is found at Ser-313 and Ser-317. The 124-residue stretch at 326–449 (HLVKEIDMLL…SKQLRDLCPS (124 aa)) folds into the MI 2 domain. Position 457 is a phosphoserine; by PKB (Ser-457).

This sequence belongs to the PDCD4 family. Interacts (via MI domains) with EIF4A2. Interacts (via MI domains) with EIF4A1 (via N-terminal domain). Heterotrimer with EIF4A1; one molecule of PDCD4 binds two molecules of EIF4A1. Interacts with EIF4G1. May form a complex with EIF4A1 and EIF4G1. The interaction between PDCD4 and EIF4A1 interferes with the interaction between EIF4A1 and EIF4G. When phosphorylated, interacts with BTRC and FBXW11. In terms of processing, polyubiquitinated, leading to its proteasomal degradation. Rapidly degraded in response to mitogens. Phosphorylation of the phosphodegron promotes interaction with BTRC and proteasomal degradation. Post-translationally, phosphorylated at Ser-67 by RPS6KB1 in response to mitogens; phosphorylation promotes proteasomal degradation of PDCD4. As to expression, up-regulated in proliferative cells. Highly expressed in epithelial cells of the mammary gland. Reduced expression in lung cancer and colon carcinoma.

Its subcellular location is the nucleus. It is found in the cytoplasm. In terms of biological role, inhibits translation initiation and cap-dependent translation. May excert its function by hindering the interaction between EIF4A1 and EIF4G. Inhibits the helicase activity of EIF4A. Modulates the activation of JUN kinase. Down-regulates the expression of MAP4K1, thus inhibiting events important in driving invasion, namely, MAPK85 activation and consequent JUN-dependent transcription. May play a role in apoptosis. Tumor suppressor. Inhibits tumor promoter-induced neoplastic transformation. Binds RNA. This Homo sapiens (Human) protein is Programmed cell death protein 4 (PDCD4).